A 265-amino-acid chain; its full sequence is Hydroxyethylthiazole kinase (265 aa).

Position 55 (M55) interacts with substrate. ATP-binding residues include R130 and S176. A substrate-binding site is contributed by G203.

The protein belongs to the Thz kinase family. Requires Mg(2+) as cofactor.

It catalyses the reaction 5-(2-hydroxyethyl)-4-methylthiazole + ATP = 4-methyl-5-(2-phosphooxyethyl)-thiazole + ADP + H(+). It participates in cofactor biosynthesis; thiamine diphosphate biosynthesis; 4-methyl-5-(2-phosphoethyl)-thiazole from 5-(2-hydroxyethyl)-4-methylthiazole: step 1/1. Its function is as follows. Catalyzes the phosphorylation of the hydroxyl group of 4-methyl-5-beta-hydroxyethylthiazole (THZ). This is Hydroxyethylthiazole kinase from Leptospira interrogans serogroup Icterohaemorrhagiae serovar copenhageni (strain Fiocruz L1-130).